Reading from the N-terminus, the 225-residue chain is uncharacterized protein (225 aa).

This is an uncharacterized protein from Mycoplasma genitalium (strain ATCC 33530 / DSM 19775 / NCTC 10195 / G37) (Mycoplasmoides genitalium).